The sequence spans 596 residues: Aspartate--tRNA(Asp/Asn) ligase (596 aa).

Glu-175 lines the L-aspartate pocket. An aspartate region spans residues 199–202 (QQYK). L-aspartate is bound by residues Arg-221 and His-454. 221–223 (RDE) lines the ATP pocket. Glu-488 contacts ATP. Residue Arg-495 participates in L-aspartate binding. 540–543 (GIDR) lines the ATP pocket.

It belongs to the class-II aminoacyl-tRNA synthetase family. Type 1 subfamily. As to quaternary structure, homodimer.

It localises to the cytoplasm. The enzyme catalyses tRNA(Asx) + L-aspartate + ATP = L-aspartyl-tRNA(Asx) + AMP + diphosphate. Its function is as follows. Aspartyl-tRNA synthetase with relaxed tRNA specificity since it is able to aspartylate not only its cognate tRNA(Asp) but also tRNA(Asn). Reaction proceeds in two steps: L-aspartate is first activated by ATP to form Asp-AMP and then transferred to the acceptor end of tRNA(Asp/Asn). This is Aspartate--tRNA(Asp/Asn) ligase from Rhizobium johnstonii (strain DSM 114642 / LMG 32736 / 3841) (Rhizobium leguminosarum bv. viciae).